The following is a 285-amino-acid chain: Anamorsin homolog 1 (285 aa).

The interval 1-150 (MEATVLLVTD…QKPTWETGSS (150 aa)) is N-terminal SAM-like domain. Residues 150–195 (SFSLKKKSVQKQESLPKPGALSVKPEMNVDLEDLIDEESLLSEEDL) are linker. [2Fe-2S] cluster contacts are provided by Cys206, Cys215, Cys218, and Cys220. The segment at 206 to 220 (CEVSTKRKACKNCTC) is fe-S binding site A. Residues Cys246, Cys249, Cys257, and Cys260 each contribute to the [4Fe-4S] cluster site. Short sequence motifs (cx2C motif) lie at residues 246–249 (CGNC) and 257–260 (CSSC). The segment at 246–260 (CGNCGLGDAFRCSSC) is fe-S binding site B.

It belongs to the anamorsin family. Monomer. The cofactor is [2Fe-2S] cluster. Requires [4Fe-4S] cluster as cofactor.

Its subcellular location is the cytoplasm. The protein localises to the mitochondrion intermembrane space. Its function is as follows. Component of the cytosolic iron-sulfur (Fe-S) protein assembly (CIA) machinery. Required for the maturation of extramitochondrial Fe-S proteins. Part of an electron transfer chain functioning in an early step of cytosolic Fe-S biogenesis, facilitating the de novo assembly of a [4Fe-4S] cluster on the cytosolic Fe-S scaffold complex. Electrons are transferred from NADPH via a FAD- and FMN-containing diflavin oxidoreductase. Together with the diflavin oxidoreductase, also required for the assembly of the diferric tyrosyl radical cofactor of ribonucleotide reductase (RNR), probably by providing electrons for reduction during radical cofactor maturation in the catalytic small subunit. This Picea sitchensis (Sitka spruce) protein is Anamorsin homolog 1.